Here is a 370-residue protein sequence, read N- to C-terminus: Coproporphyrin III ferrochelatase (370 aa).

Positions 58 and 127 each coordinate Fe-coproporphyrin III. Fe(2+) is bound by residues histidine 189 and glutamate 276.

The protein belongs to the ferrochelatase family.

The protein localises to the cytoplasm. It catalyses the reaction Fe-coproporphyrin III + 2 H(+) = coproporphyrin III + Fe(2+). The protein operates within porphyrin-containing compound metabolism; protoheme biosynthesis. In terms of biological role, involved in coproporphyrin-dependent heme b biosynthesis. Catalyzes the insertion of ferrous iron into coproporphyrin III to form Fe-coproporphyrin III. The sequence is that of Coproporphyrin III ferrochelatase from Corynebacterium glutamicum (strain ATCC 13032 / DSM 20300 / JCM 1318 / BCRC 11384 / CCUG 27702 / LMG 3730 / NBRC 12168 / NCIMB 10025 / NRRL B-2784 / 534).